Here is a 511-residue protein sequence, read N- to C-terminus: Probable DNA ligase (511 aa).

Glu-209 contributes to the ATP binding site. Lys-211 (N6-AMP-lysine intermediate) is an active-site residue. Arg-216, Arg-231, Glu-260, Phe-299, Arg-371, and Lys-377 together coordinate ATP.

It belongs to the ATP-dependent DNA ligase family. Mg(2+) is required as a cofactor.

It catalyses the reaction ATP + (deoxyribonucleotide)n-3'-hydroxyl + 5'-phospho-(deoxyribonucleotide)m = (deoxyribonucleotide)n+m + AMP + diphosphate.. Its function is as follows. DNA ligase that seals nicks in double-stranded DNA during DNA replication, DNA recombination and DNA repair. The protein is Probable DNA ligase of Mycolicibacterium gilvum (strain PYR-GCK) (Mycobacterium gilvum (strain PYR-GCK)).